A 526-amino-acid chain; its full sequence is MGLTLGERVQHCLLVLVSGLFLALFRLLSPGTKRPKHLPPITNPLLTLSAVQLAEKIRRGEVSSVEVVQAYIDRIQEVNPLLNALIKDRFSAALLEAARADKLIKEENGGEEVLRNQFPLLGVPMSVKESFGLQGMPNSGGLKSRGKVLASVDAPPVALLKRAGAIPLGVTNTSELCMWMESNNHLYGITSNPYNLERICGGSSGGEGSIIGGGASVFGIGSDIGGSIRMPCFFNGIFGHKPSRGVVSNDNQFPRCSGLQNEYTGSGPMCRYAEDLLPLLKIMAGPTADKLTLSKAVDLKKLRFFTIVDDGGSPLTSPVDRQLVEVQKRVAARLEADLGVTVQEVNFPQLKYSYQIWDTFLALPDKDGKPPEAFVELMADGGSVWPVWELIKRIFGRSEHTVAAIGLALMESSHSSKSSEFILKQKEDLQREMEDLLGTDGVLLYPSHPLLAPKHHHPLFMPFNFSYTGILNILGLPVTQCPLGLSKERLPLGVQVVAGLCQDHLTLAMALYLEKAFGGWVDPGVV.

The helical transmembrane segment at 12–32 (CLLVLVSGLFLALFRLLSPGT) threads the bilayer. Catalysis depends on charge relay system residues Lys-128 and Ser-203. The Acyl-ester intermediate role is filled by Ser-227.

This sequence belongs to the amidase family.

The protein resides in the membrane. The enzyme catalyses N-(5Z,8Z,11Z,14Z-eicosatetraenoyl)-ethanolamine + H2O = ethanolamine + (5Z,8Z,11Z,14Z)-eicosatetraenoate. It catalyses the reaction (9Z)-octadecenamide + H2O = (9Z)-octadecenoate + NH4(+). The sequence is that of Fatty-acid amide hydrolase 2-B (faah2b) from Danio rerio (Zebrafish).